A 129-amino-acid polypeptide reads, in one-letter code: UPF0212 protein MM_2357 (129 aa).

It belongs to the UPF0212 family.

The sequence is that of UPF0212 protein MM_2357 from Methanosarcina mazei (strain ATCC BAA-159 / DSM 3647 / Goe1 / Go1 / JCM 11833 / OCM 88) (Methanosarcina frisia).